Consider the following 299-residue polypeptide: Protease HtpX homolog (299 aa).

A run of 2 helical transmembrane segments spans residues I15–F35 and G39–F59. H143 contacts Zn(2+). The active site involves E144. H147 provides a ligand contact to Zn(2+). 2 helical membrane passes run I158–W178 and I198–V218. Zn(2+) is bound at residue E227.

The protein belongs to the peptidase M48B family. Requires Zn(2+) as cofactor.

It is found in the cell membrane. This is Protease HtpX homolog from Streptococcus pneumoniae serotype 4 (strain ATCC BAA-334 / TIGR4).